The chain runs to 270 residues: Bis(5'-nucleosyl)-tetraphosphatase, symmetrical (270 aa).

It belongs to the Ap4A hydrolase family.

It carries out the reaction P(1),P(4)-bis(5'-adenosyl) tetraphosphate + H2O = 2 ADP + 2 H(+). Its function is as follows. Hydrolyzes diadenosine 5',5'''-P1,P4-tetraphosphate to yield ADP. This is Bis(5'-nucleosyl)-tetraphosphatase, symmetrical from Cellvibrio japonicus (strain Ueda107) (Pseudomonas fluorescens subsp. cellulosa).